Reading from the N-terminus, the 714-residue chain is Polyribonucleotide nucleotidyltransferase (714 aa).

D488 and D494 together coordinate Mg(2+). The KH domain occupies 555-614; sequence PRIEVMNIPTDKIRDVIGSGGKVIREIVEKTGAKINIEDDGTVKIASSNGKEIEAAKKWI. An S1 motif domain is found at 624–692; that stretch reads GEIYEGTVVK…ERGKVRLSMK (69 aa).

It belongs to the polyribonucleotide nucleotidyltransferase family. Mg(2+) serves as cofactor.

It localises to the cytoplasm. It carries out the reaction RNA(n+1) + phosphate = RNA(n) + a ribonucleoside 5'-diphosphate. Its function is as follows. Involved in mRNA degradation. Catalyzes the phosphorolysis of single-stranded polyribonucleotides processively in the 3'- to 5'-direction. This chain is Polyribonucleotide nucleotidyltransferase, found in Brucella suis biovar 1 (strain 1330).